The sequence spans 332 residues: Heat-inducible transcription repressor HrcA (332 aa).

It belongs to the HrcA family.

Functionally, negative regulator of class I heat shock genes (grpE-dnaK-dnaJ and groELS operons). Prevents heat-shock induction of these operons. The sequence is that of Heat-inducible transcription repressor HrcA from Mycoplasma mobile (strain ATCC 43663 / 163K / NCTC 11711) (Mesomycoplasma mobile).